A 139-amino-acid polypeptide reads, in one-letter code: Fluoroacetyl-CoA thioesterase (139 aa).

Residues 40–50 (FATGFMVGLME) and Gly-69 each bind substrate. Residues Thr-42 and Glu-50 contribute to the active site. Residues Gly-69 and 76–77 (HT) contribute to the CoA site. The active site involves His-76. A substrate-binding site is contributed by Arg-120.

Homodimer.

The enzyme catalyses fluoroacetyl-CoA + H2O = fluoroacetate + CoA + H(+). Functionally, hydrolyzes fluoroacetyl-CoA before it can react with citrate synthase, and thus confers fluoroacetate resistance. Cannot use acetyl-CoA as substrate. The polypeptide is Fluoroacetyl-CoA thioesterase (flK) (Streptantibioticus cattleyicolor (Streptomyces cattleya)).